We begin with the raw amino-acid sequence, 466 residues long: Argininosuccinate lyase 1 (466 aa).

The protein belongs to the lyase 1 family. Argininosuccinate lyase subfamily.

The protein resides in the cytoplasm. The catalysed reaction is 2-(N(omega)-L-arginino)succinate = fumarate + L-arginine. Its pathway is amino-acid biosynthesis; L-arginine biosynthesis; L-arginine from L-ornithine and carbamoyl phosphate: step 3/3. This chain is Argininosuccinate lyase 1, found in Agrobacterium fabrum (strain C58 / ATCC 33970) (Agrobacterium tumefaciens (strain C58)).